We begin with the raw amino-acid sequence, 565 residues long: Urease subunit beta (565 aa).

Residues 130–565 (GGIDTHIHFI…LALARKYFMI (436 aa)) enclose the Urease domain. Residues histidine 135, histidine 137, and lysine 218 each contribute to the Ni(2+) site. N6-carboxylysine is present on lysine 218. Residue histidine 220 participates in substrate binding. Residues histidine 247 and histidine 273 each contribute to the Ni(2+) site. Histidine 321 functions as the Proton donor in the catalytic mechanism. Aspartate 361 contacts Ni(2+).

It belongs to the metallo-dependent hydrolases superfamily. Urease alpha subunit family. In terms of assembly, heterohexamer of 3 UreA (alpha) and 3 UreB (beta) subunits. Ni cation is required as a cofactor. In terms of processing, carboxylation allows a single lysine to coordinate two nickel ions.

The protein localises to the cytoplasm. The catalysed reaction is urea + 2 H2O + H(+) = hydrogencarbonate + 2 NH4(+). It participates in nitrogen metabolism; urea degradation; CO(2) and NH(3) from urea (urease route): step 1/1. The sequence is that of Urease subunit beta from Campylobacter lari.